The sequence spans 212 residues: MGIITKIEQQKRNDDRVNIYVDDKFFIAIFKELVYTFNLKKGNEINEEELKPILDDEMYIKAKNKALNILSHADQSEKKLKEKLSSEFDENIIERVIDFLKSYNLVNDSVLAQKIVNTNVNLNKCGKNRIKQNLYNKGINRSTINEAVSELDKDTEFENAMYLAKKRYERVKKEDKKKIYQKISQHLSYKGFDYDIIKRVLNKLLNFDEYDI.

It belongs to the RecX family.

It localises to the cytoplasm. Functionally, modulates RecA activity. This chain is Regulatory protein RecX, found in Clostridioides difficile (strain 630) (Peptoclostridium difficile).